The sequence spans 553 residues: CTP synthase (553 aa).

An amidoligase domain region spans residues 1–270 (MTKYVFVTGG…DELICEELKL (270 aa)). Ser13 is a binding site for CTP. Ser13 provides a ligand contact to UTP. Residues 14 to 19 (SLGKGI) and Asp71 each bind ATP. Positions 71 and 144 each coordinate Mg(2+). Residues 151–153 (DIE), 191–196 (KTKPTQ), and Lys227 contribute to the CTP site. Residues 191–196 (KTKPTQ) and Lys227 contribute to the UTP site. A Glutamine amidotransferase type-1 domain is found at 295–547 (TIGMVGKYVE…VEAARAHHEA (253 aa)). L-glutamine is bound at residue Gly356. The Nucleophile; for glutamine hydrolysis role is filled by Cys383. L-glutamine contacts are provided by residues 384–387 (LGMQ), Glu407, and Arg473. Catalysis depends on residues His520 and Glu522.

It belongs to the CTP synthase family. Homotetramer.

The catalysed reaction is UTP + L-glutamine + ATP + H2O = CTP + L-glutamate + ADP + phosphate + 2 H(+). It carries out the reaction L-glutamine + H2O = L-glutamate + NH4(+). It catalyses the reaction UTP + NH4(+) + ATP = CTP + ADP + phosphate + 2 H(+). Its pathway is pyrimidine metabolism; CTP biosynthesis via de novo pathway; CTP from UDP: step 2/2. Allosterically activated by GTP, when glutamine is the substrate; GTP has no effect on the reaction when ammonia is the substrate. The allosteric effector GTP functions by stabilizing the protein conformation that binds the tetrahedral intermediate(s) formed during glutamine hydrolysis. Inhibited by the product CTP, via allosteric rather than competitive inhibition. Functionally, catalyzes the ATP-dependent amination of UTP to CTP with either L-glutamine or ammonia as the source of nitrogen. Regulates intracellular CTP levels through interactions with the four ribonucleotide triphosphates. In Paraburkholderia phymatum (strain DSM 17167 / CIP 108236 / LMG 21445 / STM815) (Burkholderia phymatum), this protein is CTP synthase.